The primary structure comprises 114 residues: Large ribosomal subunit protein uL22 (114 aa).

The protein belongs to the universal ribosomal protein uL22 family. As to quaternary structure, part of the 50S ribosomal subunit.

In terms of biological role, this protein binds specifically to 23S rRNA; its binding is stimulated by other ribosomal proteins, e.g. L4, L17, and L20. It is important during the early stages of 50S assembly. It makes multiple contacts with different domains of the 23S rRNA in the assembled 50S subunit and ribosome. Its function is as follows. The globular domain of the protein is located near the polypeptide exit tunnel on the outside of the subunit, while an extended beta-hairpin is found that lines the wall of the exit tunnel in the center of the 70S ribosome. The protein is Large ribosomal subunit protein uL22 of Myxococcus xanthus (strain DK1622).